The chain runs to 222 residues: Beta-casein (222 aa).

A signal peptide spans 1–15 (MKVLILACLVALALA). Thr27 is subject to Phosphothreonine. 4 positions are modified to phosphoserine: Ser30, Ser32, Ser33, and Ser34.

This sequence belongs to the beta-casein family. As to expression, mammary gland specific. Secreted in milk.

The protein resides in the secreted. Important role in determination of the surface properties of the casein micelles. This chain is Beta-casein (CSN2), found in Ovis aries (Sheep).